Reading from the N-terminus, the 865-residue chain is Bifunctional uridylyltransferase/uridylyl-removing enzyme (865 aa).

The tract at residues 1-318 (MPHVDLNPLK…FPRPDSDARL (318 aa)) is uridylyltransferase. The uridylyl-removing stretch occupies residues 319–675 (IDDDFRNLRE…VRPTEHGEGL (357 aa)). The HD domain occupies 437 to 559 (VDQHTLAVVR…VGDERRLAAL (123 aa)). 2 consecutive ACT domains span residues 676-762 (QVMV…RLPH) and 789-865 (RLSV…QQAA). Positions 747 to 767 (DPHAARHAHAPRRLPHSHARR) are disordered. Residues 751-767 (ARHAHAPRRLPHSHARR) are compositionally biased toward basic residues.

The protein belongs to the GlnD family. The cofactor is Mg(2+).

The enzyme catalyses [protein-PII]-L-tyrosine + UTP = [protein-PII]-uridylyl-L-tyrosine + diphosphate. It catalyses the reaction [protein-PII]-uridylyl-L-tyrosine + H2O = [protein-PII]-L-tyrosine + UMP + H(+). Uridylyltransferase (UTase) activity is inhibited by glutamine, while glutamine activates uridylyl-removing (UR) activity. Its function is as follows. Modifies, by uridylylation and deuridylylation, the PII regulatory proteins (GlnB and homologs), in response to the nitrogen status of the cell that GlnD senses through the glutamine level. Under low glutamine levels, catalyzes the conversion of the PII proteins and UTP to PII-UMP and PPi, while under higher glutamine levels, GlnD hydrolyzes PII-UMP to PII and UMP (deuridylylation). Thus, controls uridylylation state and activity of the PII proteins, and plays an important role in the regulation of nitrogen assimilation and metabolism. The polypeptide is Bifunctional uridylyltransferase/uridylyl-removing enzyme (Bordetella pertussis (strain Tohama I / ATCC BAA-589 / NCTC 13251)).